The chain runs to 262 residues: uncharacterized protein (262 aa).

7 helical membrane passes run 42–62 (IAKF…TVLN), 71–91 (IINI…LLYF), 115–135 (IGLA…MELI), 145–165 (VVSY…CCFN), 185–205 (LWAY…YSNH), 206–226 (PLMI…PFMI), and 235–255 (AYPS…NYAI).

It is found in the membrane. This is an uncharacterized protein from Acanthamoeba polyphaga mimivirus (APMV).